Here is a 199-residue protein sequence, read N- to C-terminus: Tumor protein p53-inducible nuclear protein 2 (199 aa).

Residues 26–41 (VSEEDEVDGWLIIDLQ) carry the LIR motif. Disordered stretches follow at residues 41–69 (QDSYTAPPDPRASPAPAGRPPPAPSLMDE), 117–153 (LESGPPSPHPEAALPDQDLSDGELAPARREPRALHHA), and 173–199 (LQRARQRAERHTLSAKVLQRQNRARES). Residues 47 to 64 (PPDPRASPAPAGRPPPAP) show a composition bias toward pro residues. Serine 136 is modified (phosphoserine).

Interacts with VMP1, GABARAP, GABARAPL1, GABARAPL2, MAP1LC3A, MAP1LC3B, MAP1LC3C and THRA. Abundantly expressed in skeletal muscle and heart and expression is highly repressed in muscle from obese diabetic rats.

It localises to the cytoplasm. The protein localises to the cytosol. The protein resides in the nucleus. Its subcellular location is the PML body. It is found in the cytoplasmic vesicle. It localises to the autophagosome. Its function is as follows. Dual regulator of transcription and autophagy. Positively regulates autophagy and is required for autophagosome formation and processing. May act as a scaffold protein that recruits MAP1LC3A, GABARAP and GABARAPL2 and brings them to the autophagosome membrane by interacting with VMP1 where, in cooperation with the BECN1-PI3-kinase class III complex, they trigger autophagosome development. Acts as a transcriptional activator of THRA. The polypeptide is Tumor protein p53-inducible nuclear protein 2 (Tp53inp2) (Rattus norvegicus (Rat)).